Here is a 261-residue protein sequence, read N- to C-terminus: (3R)-3-hydroxyacyl-CoA dehydrogenase (261 aa).

Residues 15 to 23 and 42 to 43 contribute to the NAD(+) site; these read LVTGAGSGI and DL. At S60 the chain carries Phosphoserine. 74-76 serves as a coordination point for NAD(+); the sequence is ADV. Substrate is bound at residue S156. K160 carries the post-translational modification N6-succinyllysine. Y169 functions as the Proton acceptor in the catalytic mechanism. NAD(+) contacts are provided by residues 169–173 and 202–204; these read YAASK and IAT. At K173 the chain carries N6-succinyllysine.

This sequence belongs to the short-chain dehydrogenases/reductases (SDR) family. As to quaternary structure, heterotetramer with CBR4; contains two molecules of HSD17B8 and CBR4. As to expression, widely expressed, particularly abundant in prostate, placenta and kidney. Expressed at protein level in various tissues like brain, cerebellum, heart, lung, kidney, ovary, testis, adrenals and prostate.

The protein resides in the mitochondrion matrix. It carries out the reaction a (3R)-3-hydroxyacyl-CoA + NAD(+) = a 3-oxoacyl-CoA + NADH + H(+). The enzyme catalyses 17beta-estradiol + NAD(+) = estrone + NADH + H(+). The catalysed reaction is testosterone + NAD(+) = androst-4-ene-3,17-dione + NADH + H(+). It catalyses the reaction 17beta-hydroxy-5alpha-androstan-3-one + NAD(+) = 5alpha-androstan-3,17-dione + NADH + H(+). The protein operates within steroid biosynthesis; estrogen biosynthesis. Its pathway is lipid metabolism; fatty acid biosynthesis. It participates in lipid metabolism; mitochondrial fatty acid beta-oxidation. Required for the solubility and assembly of the heterotetramer 3-ketoacyl-[acyl carrier protein] (ACP) reductase functional complex (KAR or KAR1) that forms part of the mitochondrial fatty acid synthase (mtFAS). Alpha-subunit of the KAR complex that acts as a scaffold protein required for the stability of carbonyl reductase type-4 (CBR4, beta-subunit of the KAR complex) and for its 3-ketoacyl-ACP reductase activity, thereby participating in mitochondrial fatty acid biosynthesis. Catalyzes the NAD-dependent conversion of (3R)-3-hydroxyacyl-CoA into 3-ketoacyl-CoA (3-oxoacyl-CoA) with no chain length preference; this enzymatic activity is not needed for the KAR function. Prefers (3R)-3-hydroxyacyl-CoA over (3S)-3-hydroxyacyl-CoA and displays enzymatic activity only in the presence of NAD(+). Cooperates with enoyl-CoA hydratase 1 in mitochondria, together they constitute an alternative route to the auxiliary enzyme pathways for the breakdown of Z-PUFA (cis polyunsaturated fatty acid) enoyl-esters. NAD-dependent 17-beta-hydroxysteroid dehydrogenase with highest activity towards estradiol (17beta-estradiol or E2). Has very low activity towards testosterone and dihydrotestosterone (17beta-hydroxy-5alpha-androstan-3-one). Primarily an oxidative enzyme, it can switch to a reductive mode determined in the appropriate physiologic milieu and catalyze the reduction of estrone (E1) to form biologically active 17beta-estradiol. This Homo sapiens (Human) protein is (3R)-3-hydroxyacyl-CoA dehydrogenase (HSD17B8).